Consider the following 206-residue polypeptide: dTTP/UTP pyrophosphatase (206 aa).

Asp87 (proton acceptor) is an active-site residue.

The protein belongs to the Maf family. YhdE subfamily. The cofactor is a divalent metal cation.

Its subcellular location is the cytoplasm. It carries out the reaction dTTP + H2O = dTMP + diphosphate + H(+). The enzyme catalyses UTP + H2O = UMP + diphosphate + H(+). In terms of biological role, nucleoside triphosphate pyrophosphatase that hydrolyzes dTTP and UTP. May have a dual role in cell division arrest and in preventing the incorporation of modified nucleotides into cellular nucleic acids. The polypeptide is dTTP/UTP pyrophosphatase (Aromatoleum aromaticum (strain DSM 19018 / LMG 30748 / EbN1) (Azoarcus sp. (strain EbN1))).